Reading from the N-terminus, the 482-residue chain is tRNA sulfurtransferase (482 aa).

The THUMP domain maps to 61–165; that stretch reads DQILAILMQT…YDHLHQVLHR (105 aa). ATP contacts are provided by residues 183–184, Lys-265, Gly-287, and Gln-296; that span reads LI. An intrachain disulfide couples Cys-344 to Cys-456. Residues 404-482 enclose the Rhodanese domain; that stretch reads IGDGAIVLDI…GYGNIKVYRP (79 aa). Catalysis depends on Cys-456, which acts as the Cysteine persulfide intermediate.

The protein belongs to the ThiI family.

It localises to the cytoplasm. The catalysed reaction is [ThiI sulfur-carrier protein]-S-sulfanyl-L-cysteine + a uridine in tRNA + 2 reduced [2Fe-2S]-[ferredoxin] + ATP + H(+) = [ThiI sulfur-carrier protein]-L-cysteine + a 4-thiouridine in tRNA + 2 oxidized [2Fe-2S]-[ferredoxin] + AMP + diphosphate. The enzyme catalyses [ThiS sulfur-carrier protein]-C-terminal Gly-Gly-AMP + S-sulfanyl-L-cysteinyl-[cysteine desulfurase] + AH2 = [ThiS sulfur-carrier protein]-C-terminal-Gly-aminoethanethioate + L-cysteinyl-[cysteine desulfurase] + A + AMP + 2 H(+). It participates in cofactor biosynthesis; thiamine diphosphate biosynthesis. In terms of biological role, catalyzes the ATP-dependent transfer of a sulfur to tRNA to produce 4-thiouridine in position 8 of tRNAs, which functions as a near-UV photosensor. Also catalyzes the transfer of sulfur to the sulfur carrier protein ThiS, forming ThiS-thiocarboxylate. This is a step in the synthesis of thiazole, in the thiamine biosynthesis pathway. The sulfur is donated as persulfide by IscS. This chain is tRNA sulfurtransferase, found in Photobacterium profundum (strain SS9).